Reading from the N-terminus, the 160-residue chain is SPbeta prophage-derived uncharacterized protein YokE (160 aa).

This chain is SPbeta prophage-derived uncharacterized protein YokE (yokE), found in Bacillus subtilis (strain 168).